The chain runs to 278 residues: Short-chain dehydrogenase RED2 (278 aa).

NADP(+) contacts are provided by I15, D70, R132, Y178, K182, V211, and T213. The active-site Proton donor is the Y178. K182 serves as the catalytic Lowers pKa of active site Tyr.

It belongs to the short-chain dehydrogenases/reductases (SDR) family.

It participates in polyketide biosynthesis. In terms of biological role, short-chain dehydrogenase; part of the gene cluster that mediates the biosynthesis of pyriculol and pyriculariol, two heptaketides that induce lesion formation upon application on rice leaves but are dispensable for pathogenicity. The highly reducing polyketide synthase synthesizes the heptaketide backbone of pyriculol and pyriculariol. Pyriculol and pyriculariol contain several hydroxyl moieties and double bonds, so it can be assumed that several reduction steps occur during biosynthesis. These reactions could be executed by PKS19 itself or partly by the tailoring enzymes OXR1, OXR2, RED1, RED2 or RED3, identified within the cluster. The FAD-linked oxidoreductase OXR1 is the only tailoring enzyme for which the function has been determined yet, and is involved in the oxidation of dihydropyriculol and dihydropyriculariol into pyriculol and pyriculariol, respectively. This is Short-chain dehydrogenase RED2 from Pyricularia oryzae (strain 70-15 / ATCC MYA-4617 / FGSC 8958) (Rice blast fungus).